The following is a 443-amino-acid chain: Phosphoglucosamine mutase (443 aa).

The active-site Phosphoserine intermediate is Ser-100. Ser-100, Asp-239, Asp-241, and Asp-243 together coordinate Mg(2+). Ser-100 is subject to Phosphoserine.

This sequence belongs to the phosphohexose mutase family. Requires Mg(2+) as cofactor. Activated by phosphorylation.

The enzyme catalyses alpha-D-glucosamine 1-phosphate = D-glucosamine 6-phosphate. Catalyzes the conversion of glucosamine-6-phosphate to glucosamine-1-phosphate. This chain is Phosphoglucosamine mutase, found in Shewanella loihica (strain ATCC BAA-1088 / PV-4).